A 206-amino-acid polypeptide reads, in one-letter code: Dephospho-CoA kinase (206 aa).

One can recognise a DPCK domain in the interval 4–200 (TVALTGGIGS…ASYLKLASQF (197 aa)). 12–17 (GSGKST) is an ATP binding site.

It belongs to the CoaE family.

Its subcellular location is the cytoplasm. The enzyme catalyses 3'-dephospho-CoA + ATP = ADP + CoA + H(+). It participates in cofactor biosynthesis; coenzyme A biosynthesis; CoA from (R)-pantothenate: step 5/5. In terms of biological role, catalyzes the phosphorylation of the 3'-hydroxyl group of dephosphocoenzyme A to form coenzyme A. This Salmonella paratyphi A (strain ATCC 9150 / SARB42) protein is Dephospho-CoA kinase.